Here is a 74-residue protein sequence, read N- to C-terminus: Translation initiation factor IF-1 (74 aa).

The 72-residue stretch at 1-72 (MGKEDVIRME…TRGRIVYRKK (72 aa)) folds into the S1-like domain.

It belongs to the IF-1 family. Component of the 30S ribosomal translation pre-initiation complex which assembles on the 30S ribosome in the order IF-2 and IF-3, IF-1 and N-formylmethionyl-tRNA(fMet); mRNA recruitment can occur at any time during PIC assembly.

It is found in the cytoplasm. In terms of biological role, one of the essential components for the initiation of protein synthesis. Stabilizes the binding of IF-2 and IF-3 on the 30S subunit to which N-formylmethionyl-tRNA(fMet) subsequently binds. Helps modulate mRNA selection, yielding the 30S pre-initiation complex (PIC). Upon addition of the 50S ribosomal subunit IF-1, IF-2 and IF-3 are released leaving the mature 70S translation initiation complex. This is Translation initiation factor IF-1 from Thermotoga maritima (strain ATCC 43589 / DSM 3109 / JCM 10099 / NBRC 100826 / MSB8).